The sequence spans 85 residues: Large ribosomal subunit protein eL34 (85 aa).

It belongs to the eukaryotic ribosomal protein eL34 family.

In Saccharolobus islandicus (strain M.16.27) (Sulfolobus islandicus), this protein is Large ribosomal subunit protein eL34.